Reading from the N-terminus, the 339-residue chain is Uroporphyrinogen decarboxylase (339 aa).

Substrate contacts are provided by residues 21 to 25, Phe-40, Asp-71, Tyr-147, Ser-202, and His-315; that span reads RQAGR.

This sequence belongs to the uroporphyrinogen decarboxylase family. Homodimer.

It is found in the cytoplasm. The catalysed reaction is uroporphyrinogen III + 4 H(+) = coproporphyrinogen III + 4 CO2. The protein operates within porphyrin-containing compound metabolism; protoporphyrin-IX biosynthesis; coproporphyrinogen-III from 5-aminolevulinate: step 4/4. Its function is as follows. Catalyzes the decarboxylation of four acetate groups of uroporphyrinogen-III to yield coproporphyrinogen-III. This chain is Uroporphyrinogen decarboxylase, found in Helicobacter pylori (strain J99 / ATCC 700824) (Campylobacter pylori J99).